The primary structure comprises 288 residues: Ankyrin repeat and SOCS box protein 8 (288 aa).

A Phosphoserine modification is found at Ser17. 4 ANK repeats span residues 52–81, 85–113, 117–146, and 150–179; these read GTLKPLHCACMVSDADCVELLLEKGAEVNA, YNRTALHYAAEKDEACVEVLLEYGANPNA, NRDTPLHWAAFKNNAECVRALLESGASVNA, and NNDTPLSWAAMKGNLESVSILLDYGAEVRV. Positions 235–288 constitute an SOCS box domain; that stretch reads QLCEKLTVLCSAPGTLKTLARYAVRRSLGLQYLPDAVKGLPLPASLKEYLLLLE.

It belongs to the ankyrin SOCS box (ASB) family. Interacts with TBK1; this interaction promotes TBK1 proteasomal degradation. Phosphorylated by TBK1. As to expression, highest level of expression in skeletal muscle. Also expressed in heart, brain, placenta, liver, kidney and pancreas.

It localises to the cytoplasm. It functions in the pathway protein modification; protein ubiquitination. In terms of biological role, may be a substrate-recognition component of a SCF-like ECS (Elongin-Cullin-SOCS-box protein) E3 ubiquitin-protein ligase complex which mediates the ubiquitination and subsequent proteasomal degradation of target proteins. Inhibits IFN-beta production through the IRF3 signaling pathway by targeting TBK1 via 'Lys-48'-linked ubiquitination, leading to its proteasomal degradation. The sequence is that of Ankyrin repeat and SOCS box protein 8 (ASB8) from Homo sapiens (Human).